The following is a 1000-amino-acid chain: Isoleucine--tRNA ligase, mitochondrial (1000 aa).

A mitochondrion-targeting transit peptide spans 1–27 (MLGAWRAAPRLRLRARFGVASVWARSA). The 'HIGH' region signature appears at 102–112 (PYANGDPHVGH). Residues K649 and K652 each coordinate ATP. The 'KMSKS' region motif lies at 649-653 (KMSKS).

The protein belongs to the class-I aminoacyl-tRNA synthetase family.

The protein resides in the mitochondrion matrix. It catalyses the reaction tRNA(Ile) + L-isoleucine + ATP = L-isoleucyl-tRNA(Ile) + AMP + diphosphate. Its function is as follows. Aminoacyl-tRNA synthetase that catalyzes the specific attachment of isoleucine to its cognate tRNA (tRNA(Ile)). This is Isoleucine--tRNA ligase, mitochondrial (IARS2) from Gallus gallus (Chicken).